The sequence spans 461 residues: tRNA modification GTPase MnmE (461 aa).

Residues R21, E87, and K126 each coordinate (6S)-5-formyl-5,6,7,8-tetrahydrofolate. A TrmE-type G domain is found at 222 to 384; that stretch reads QSTVVLYGEP…LLELLKSKLT (163 aa). A K(+)-binding site is contributed by N232. Residues 232–237, 251–257, and 276–279 each bind GTP; these read NTGKSS, SDVPGTT, and DTAG. S236 contacts Mg(2+). Positions 251, 253, and 256 each coordinate K(+). Mg(2+) is bound at residue T257. K461 contacts (6S)-5-formyl-5,6,7,8-tetrahydrofolate.

It belongs to the TRAFAC class TrmE-Era-EngA-EngB-Septin-like GTPase superfamily. TrmE GTPase family. Homodimer. Heterotetramer of two MnmE and two MnmG subunits. K(+) serves as cofactor.

It localises to the cytoplasm. In terms of biological role, exhibits a very high intrinsic GTPase hydrolysis rate. Involved in the addition of a carboxymethylaminomethyl (cmnm) group at the wobble position (U34) of certain tRNAs, forming tRNA-cmnm(5)s(2)U34. In Leptospira biflexa serovar Patoc (strain Patoc 1 / Ames), this protein is tRNA modification GTPase MnmE.